The following is a 180-amino-acid chain: Ribulose bisphosphate carboxylase small subunit, chloroplastic (180 aa).

The N-terminal 56 residues, 1 to 56 (MASSVLSSAAVATRSNVAQANMVAPFTGLKSAASFPVSRKQNLDITSIASNGGRVQ), are a transit peptide targeting the chloroplast.

Belongs to the RuBisCO small chain family. Heterohexadecamer of 8 large and 8 small subunits.

Its subcellular location is the plastid. It localises to the chloroplast. Its function is as follows. RuBisCO catalyzes two reactions: the carboxylation of D-ribulose 1,5-bisphosphate, the primary event in carbon dioxide fixation, as well as the oxidative fragmentation of the pentose substrate. Both reactions occur simultaneously and in competition at the same active site. Although the small subunit is not catalytic it is essential for maximal activity. This chain is Ribulose bisphosphate carboxylase small subunit, chloroplastic, found in Nicotiana plumbaginifolia (Leadwort-leaved tobacco).